Reading from the N-terminus, the 100-residue chain is Small ribosomal subunit protein uS14 (100 aa).

The protein belongs to the universal ribosomal protein uS14 family. Part of the 30S ribosomal subunit. Contacts proteins S3 and S10.

In terms of biological role, binds 16S rRNA, required for the assembly of 30S particles and may also be responsible for determining the conformation of the 16S rRNA at the A site. The chain is Small ribosomal subunit protein uS14 from Parasynechococcus marenigrum (strain WH8102).